The following is a 264-amino-acid chain: 3-methyl-2-oxobutanoate hydroxymethyltransferase (264 aa).

Residues Asp-45 and Asp-84 each coordinate Mg(2+). 3-methyl-2-oxobutanoate-binding positions include 45 to 46 (DS), Asp-84, and Lys-112. Glu-114 serves as a coordination point for Mg(2+). The active-site Proton acceptor is Glu-181.

Belongs to the PanB family. Homodecamer; pentamer of dimers. Mg(2+) serves as cofactor.

Its subcellular location is the cytoplasm. The enzyme catalyses 3-methyl-2-oxobutanoate + (6R)-5,10-methylene-5,6,7,8-tetrahydrofolate + H2O = 2-dehydropantoate + (6S)-5,6,7,8-tetrahydrofolate. It functions in the pathway cofactor biosynthesis; (R)-pantothenate biosynthesis; (R)-pantoate from 3-methyl-2-oxobutanoate: step 1/2. Catalyzes the reversible reaction in which hydroxymethyl group from 5,10-methylenetetrahydrofolate is transferred onto alpha-ketoisovalerate to form ketopantoate. The sequence is that of 3-methyl-2-oxobutanoate hydroxymethyltransferase from Pseudoalteromonas translucida (strain TAC 125).